The following is a 184-amino-acid chain: Isopentenyl-diphosphate Delta-isomerase (184 aa).

Residues His-25 and His-32 each coordinate Mn(2+). The Nudix hydrolase domain occupies 30-164; it reads PLHLAFSCWL…PWAFSPWMVL (135 aa). Cys-67 is a catalytic residue. His-69 contributes to the Mn(2+) binding site. A Mg(2+)-binding site is contributed by Glu-87. Mn(2+)-binding residues include Glu-114 and Glu-116. Glu-116 is an active-site residue.

This sequence belongs to the IPP isomerase type 1 family. In terms of assembly, homodimer. It depends on Mg(2+) as a cofactor. Requires Mn(2+) as cofactor.

It is found in the cytoplasm. The enzyme catalyses isopentenyl diphosphate = dimethylallyl diphosphate. The protein operates within isoprenoid biosynthesis; dimethylallyl diphosphate biosynthesis; dimethylallyl diphosphate from isopentenyl diphosphate: step 1/1. Catalyzes the 1,3-allylic rearrangement of the homoallylic substrate isopentenyl (IPP) to its highly electrophilic allylic isomer, dimethylallyl diphosphate (DMAPP). This chain is Isopentenyl-diphosphate Delta-isomerase, found in Klebsiella pneumoniae subsp. pneumoniae (strain ATCC 700721 / MGH 78578).